A 135-amino-acid chain; its full sequence is FK506-binding protein 2 (135 aa).

Positions 1 to 17 (MLLKSLFLLFLTAIAFA) are cleaved as a signal peptide. The 88-residue stretch at 40–127 (GDLISVHYEG…VFVAELVDIA (88 aa)) folds into the PPIase FKBP-type domain. Positions 132 to 135 (HDEL) match the Prevents secretion from ER motif.

This sequence belongs to the FKBP-type PPIase family. FKBP2 subfamily.

It is found in the endoplasmic reticulum. It carries out the reaction [protein]-peptidylproline (omega=180) = [protein]-peptidylproline (omega=0). With respect to regulation, inhibited by both FK506 and rapamycin. Its function is as follows. PPIases accelerate the folding of proteins. It catalyzes the cis-trans isomerization of proline imidic peptide bonds in oligopeptides. The protein is FK506-binding protein 2 (FPR2) of Debaryomyces hansenii (strain ATCC 36239 / CBS 767 / BCRC 21394 / JCM 1990 / NBRC 0083 / IGC 2968) (Yeast).